The sequence spans 62 residues: Large ribosomal subunit protein bL33c (62 aa).

This sequence belongs to the bacterial ribosomal protein bL33 family.

The protein resides in the plastid. Its subcellular location is the chloroplast. The sequence is that of Large ribosomal subunit protein bL33c from Cyanidioschyzon merolae (strain NIES-3377 / 10D) (Unicellular red alga).